A 475-amino-acid chain; its full sequence is Putative histidine permease (475 aa).

12 helical membrane passes run 20–40 (LFMI…TGYT), 44–64 (AGPG…YLVM), 87–107 (FIGP…WVVT), 127–147 (SVWM…AFSV), 162–182 (IVTI…LISL), 199–219 (GLFP…SFAF), 246–266 (VAWR…GLIS), 277–297 (FVAV…NFVI), 341–361 (ALMI…VAPG), 363–383 (VYVV…MSIA), 410–430 (YPLM…GLAF), and 434–454 (QRIA…IYHF).

It belongs to the amino acid-polyamine-organocation (APC) superfamily.

It is found in the cell membrane. The sequence is that of Putative histidine permease (hutM) from Bacillus subtilis (strain 168).